The primary structure comprises 315 residues: Methionyl-tRNA formyltransferase (315 aa).

Residue 113–116 (SLLP) coordinates (6S)-5,6,7,8-tetrahydrofolate.

It belongs to the Fmt family.

It catalyses the reaction L-methionyl-tRNA(fMet) + (6R)-10-formyltetrahydrofolate = N-formyl-L-methionyl-tRNA(fMet) + (6S)-5,6,7,8-tetrahydrofolate + H(+). Its function is as follows. Attaches a formyl group to the free amino group of methionyl-tRNA(fMet). The formyl group appears to play a dual role in the initiator identity of N-formylmethionyl-tRNA by promoting its recognition by IF2 and preventing the misappropriation of this tRNA by the elongation apparatus. In Erwinia tasmaniensis (strain DSM 17950 / CFBP 7177 / CIP 109463 / NCPPB 4357 / Et1/99), this protein is Methionyl-tRNA formyltransferase.